Here is a 159-residue protein sequence, read N- to C-terminus: Eukaryotic translation initiation factor 5A-1 (159 aa).

Positions 1–12 are enriched in basic and acidic residues; that stretch reads MSDEEHHFESKA. Positions 1 to 23 are disordered; it reads MSDEEHHFESKADAGASKTYPQQ. Residue Lys-52 is modified to Hypusine.

Belongs to the eIF-5A family. In terms of processing, lys-52 undergoes hypusination, a unique post-translational modification that consists in the addition of a butylamino group from spermidine to lysine side chain, leading to the formation of the unusual amino acid hypusine. eIF-5As are the only known proteins to undergo this modification, which is essential for their function.

Translation factor that promotes translation elongation and termination, particularly upon ribosome stalling at specific amino acid sequence contexts. Binds between the exit (E) and peptidyl (P) site of the ribosome and promotes rescue of stalled ribosome: specifically required for efficient translation of polyproline-containing peptides as well as other motifs that stall the ribosome. Acts as a ribosome quality control (RQC) cofactor by joining the RQC complex to facilitate peptidyl transfer during CAT tailing step. In Nicotiana plumbaginifolia (Leadwort-leaved tobacco), this protein is Eukaryotic translation initiation factor 5A-1 (EIF-5A1).